Consider the following 400-residue polypeptide: Double C2-like domain-containing protein alpha (400 aa).

An interaction with UNC13D and DYNLT1 region spans residues methionine 1 to alanine 89. C2 domains follow at residues alanine 89 to isoleucine 211 and glutamate 251 to histidine 384. Ca(2+) is bound by residues aspartate 120, aspartate 126, aspartate 181, aspartate 183, aspartate 282, aspartate 288, aspartate 342, aspartate 344, and aspartate 350. Positions arginine 215–alanine 400 are interaction with UNC13D.

Interacts (via N-terminus) with UNC13A. Interacts with cytoplasmic dynein light chain DYNLT1. Interacts with UNC13D. Requires Ca(2+) as cofactor. As to expression, predominantly expressed in brain. Also expressed in testis.

It is found in the lysosome. The protein localises to the cytoplasmic vesicle. It localises to the secretory vesicle. Its subcellular location is the synaptic vesicle membrane. The protein resides in the synapse. It is found in the synaptosome. In terms of biological role, calcium sensor which most probably regulates fusion of vesicles with membranes. Binds calcium and phospholipids. May be involved in calcium dependent neurotransmitter release through the interaction with UNC13A. May be involved in calcium-dependent spontaneous release of neurotransmitter in absence of action potentials in neuronal cells. Regulates Ca(2+)-dependent secretory lysosome exocytosis in mast cells. This Homo sapiens (Human) protein is Double C2-like domain-containing protein alpha (DOC2A).